Consider the following 511-residue polypeptide: Chromosomal replication initiator protein DnaA (511 aa).

Residues 1–87 (MSVELWQQCV…IGSKRSSAPR (87 aa)) form a domain I, interacts with DnaA modulators region. Residues 87–174 (RAAPNAPLAA…QVEGALKHTS (88 aa)) are domain II. The segment at 133 to 160 (VATHDEPSRDSFDPMAGASSQQAPARAE) is disordered. Positions 134-144 (ATHDEPSRDSF) are enriched in basic and acidic residues. The interval 175-391 (YLNRTFTFEN…GALKRVIAHS (217 aa)) is domain III, AAA+ region. ATP is bound by residues G219, G221, K222, and T223. Residues 392–511 (HFMGRDITIE…YKNLLRTLTT (120 aa)) are domain IV, binds dsDNA.

This sequence belongs to the DnaA family. In terms of assembly, oligomerizes as a right-handed, spiral filament on DNA at oriC.

Its subcellular location is the cytoplasm. Its function is as follows. Plays an essential role in the initiation and regulation of chromosomal replication. ATP-DnaA binds to the origin of replication (oriC) to initiate formation of the DNA replication initiation complex once per cell cycle. Binds the DnaA box (a 9 base pair repeat at the origin) and separates the double-stranded (ds)DNA. Forms a right-handed helical filament on oriC DNA; dsDNA binds to the exterior of the filament while single-stranded (ss)DNA is stabiized in the filament's interior. The ATP-DnaA-oriC complex binds and stabilizes one strand of the AT-rich DNA unwinding element (DUE), permitting loading of DNA polymerase. After initiation quickly degrades to an ADP-DnaA complex that is not apt for DNA replication. Binds acidic phospholipids. The protein is Chromosomal replication initiator protein DnaA of Pseudomonas syringae pv. tomato (strain ATCC BAA-871 / DC3000).